The following is a 351-amino-acid chain: Dual-specificity RNA methyltransferase RlmN (351 aa).

E90 serves as the catalytic Proton acceptor. A Radical SAM core domain is found at 96 to 330 (EKDHYTACLS…ATLRKSKGSD (235 aa)). An intrachain disulfide couples C103 to C335. Residues C110, C114, and C117 each coordinate [4Fe-4S] cluster. S-adenosyl-L-methionine is bound by residues 162–163 (GE), S194, 216–218 (SLH), and N292. The active-site S-methylcysteine intermediate is the C335.

Belongs to the radical SAM superfamily. RlmN family. [4Fe-4S] cluster serves as cofactor.

The protein localises to the cytoplasm. It catalyses the reaction adenosine(2503) in 23S rRNA + 2 reduced [2Fe-2S]-[ferredoxin] + 2 S-adenosyl-L-methionine = 2-methyladenosine(2503) in 23S rRNA + 5'-deoxyadenosine + L-methionine + 2 oxidized [2Fe-2S]-[ferredoxin] + S-adenosyl-L-homocysteine. The catalysed reaction is adenosine(37) in tRNA + 2 reduced [2Fe-2S]-[ferredoxin] + 2 S-adenosyl-L-methionine = 2-methyladenosine(37) in tRNA + 5'-deoxyadenosine + L-methionine + 2 oxidized [2Fe-2S]-[ferredoxin] + S-adenosyl-L-homocysteine. Functionally, specifically methylates position 2 of adenine 2503 in 23S rRNA and position 2 of adenine 37 in tRNAs. m2A2503 modification seems to play a crucial role in the proofreading step occurring at the peptidyl transferase center and thus would serve to optimize ribosomal fidelity. This Solidesulfovibrio magneticus (strain ATCC 700980 / DSM 13731 / RS-1) (Desulfovibrio magneticus) protein is Dual-specificity RNA methyltransferase RlmN.